The primary structure comprises 313 residues: MTQWYPASPALWQGRDDSIEAPDARRLFQTVTRSETFSPENWQQKIALMGFACDEGVKRNAGRPGAAGGPDALRKALANMASHQGHERLVDLGNWVAPTPDLEGAQQVLRDAVSRCLRAGMRTLVLGGGHETAFGHGAGVLDAFAQESVGIINLDAHLDLRQTDRATSGTPFRQLAQLCDAQSRAFHYACFGVSRAANTQALWREAQWRNVTVVEDLDCHDALAQMAQFIDKVDKIYLTIDLDVLPVWEMPAVSAPAALGVPLIQVLRLIEPVCRSGKLQAADLVEFNPRFDEDGAAARVAARLGWQIAHWWR.

Mn(2+) is bound by residues histidine 130, aspartate 155, histidine 157, aspartate 159, aspartate 241, and aspartate 243.

This sequence belongs to the arginase family. Mn(2+) serves as cofactor.

It carries out the reaction N-formimidoyl-L-glutamate + H2O = formamide + L-glutamate. It functions in the pathway amino-acid degradation; L-histidine degradation into L-glutamate; L-glutamate from N-formimidoyl-L-glutamate (hydrolase route): step 1/1. Functionally, catalyzes the conversion of N-formimidoyl-L-glutamate to L-glutamate and formamide. In Salmonella paratyphi B (strain ATCC BAA-1250 / SPB7), this protein is Formimidoylglutamase.